A 305-amino-acid chain; its full sequence is Ankyrin repeat domain-containing protein 23 (305 aa).

The stretch at 41 to 72 forms a coiled coil; that stretch reads QEAVAREKLKLEEEKKKKLERFNSTRFNLDNL. Basic residues predominate over residues 83 to 92; that stretch reads KKRLRHRVPP. The disordered stretch occupies residues 83–104; that stretch reads KKRLRHRVPPRKPEPLVKPQSQ. ANK repeat units lie at residues 143 to 172, 176 to 205, 209 to 238, and 242 to 271; these read LHRT…TVDA, LDRT…RVNA, IGST…HLNA, and EGDT…ELGV. The segment at 178 to 195 is interaction with TTN; sequence RTPVFWACRGGHLVILKQ.

As to quaternary structure, interacts with titin/TTN and MYPN. Mainly expressed in heart, skeletal muscle and brown adipose tissues.

It is found in the nucleus. Functionally, may be involved in the energy metabolism. Could be a molecular link between myofibrillar stretch-induced signaling pathways and muscle gene expression. This chain is Ankyrin repeat domain-containing protein 23 (ANKRD23), found in Homo sapiens (Human).